The sequence spans 558 residues: Kelch-like protein 23 (558 aa).

A BTB domain is found at threonine 36–lysine 104. The region spanning cysteine 139–glycine 240 is the BACK domain. Kelch repeat units follow at residues threonine 274–proline 320, asparagine 321–glycine 369, cysteine 370–glutamate 416, isoleucine 418–asparagine 466, lysine 467–glycine 508, and isoleucine 510–asparagine 557.

In Mus musculus (Mouse), this protein is Kelch-like protein 23 (Klhl23).